The sequence spans 1125 residues: Kinase and exchange factor for Rac B (1125 aa).

Disordered regions lie at residues 50–175 (VTGG…ASIN), 247–287 (SVPG…GGKF), and 322–362 (KTRD…VNSD). The span at 59-91 (NNQQQQQNNNNNNNNNNNNNNNNNNNNNNNNNN) shows a compositional bias: low complexity. Over residues 92–106 (SGEISSNNSTPSILF) the composition is skewed to polar residues. Residues 113 to 124 (TAPPAPPQPTTP) are compositionally biased toward pro residues. The span at 137–161 (NINQQPIGGVNNNNNNNNKDSPSNK) shows a compositional bias: low complexity. The 192-residue stretch at 380–571 (KRRQVSLQIL…KSTVDYVKEK (192 aa)) folds into the DH domain. The PH domain maps to 601–822 (RYVREGMLTE…WIQAIHANII (222 aa)). 2 disordered regions span residues 693–729 (INNM…SNNN) and 761–791 (SNNN…YSNG). The segment covering 694–729 (NNMTNNDSKSKNNNNNNSNGNNNNNNINSNSNSNNN) has biased composition (low complexity). The Protein kinase domain occupies 848–1117 (IKLCEQIGSG…QLVQKLTKML (270 aa)). ATP-binding positions include 854–862 (IGSGGSGCT) and lysine 876. Aspartate 971 (proton acceptor) is an active-site residue.

It belongs to the protein kinase superfamily. STE Ser/Thr protein kinase family. Requires Mg(2+) as cofactor.

The catalysed reaction is L-seryl-[protein] + ATP = O-phospho-L-seryl-[protein] + ADP + H(+). It carries out the reaction L-threonyl-[protein] + ATP = O-phospho-L-threonyl-[protein] + ADP + H(+). In Dictyostelium discoideum (Social amoeba), this protein is Kinase and exchange factor for Rac B.